Consider the following 306-residue polypeptide: Thiamine-monophosphate kinase (306 aa).

Mg(2+)-binding residues include Asp27, Thr41, Thr42, and Asp43. Substrate is bound at residue His50. Asp71 provides a ligand contact to Mg(2+). Residues Tyr101, 118–119 (GN), and Arg142 each bind ATP. Residue Asn119 coordinates Mg(2+). Asp207 is a binding site for Mg(2+). Ser209 is a binding site for ATP. A Mg(2+)-binding site is contributed by Asp210. Substrate is bound by residues Glu260 and Trp303.

It belongs to the thiamine-monophosphate kinase family. In terms of assembly, homodimer.

It carries out the reaction thiamine phosphate + ATP = thiamine diphosphate + ADP. It participates in cofactor biosynthesis; thiamine diphosphate biosynthesis; thiamine diphosphate from thiamine phosphate: step 1/1. Functionally, catalyzes the ATP-dependent phosphorylation of thiamine-monophosphate (TMP) to form thiamine-pyrophosphate (TPP), the active form of vitamin B1. This Aquifex aeolicus (strain VF5) protein is Thiamine-monophosphate kinase (thiL).